We begin with the raw amino-acid sequence, 200 residues long: Small ribosomal subunit protein uS4c (200 aa).

Positions Met-91 to Asn-154 constitute an S4 RNA-binding domain.

This sequence belongs to the universal ribosomal protein uS4 family. As to quaternary structure, part of the 30S ribosomal subunit. Contacts protein S5. The interaction surface between S4 and S5 is involved in control of translational fidelity.

Its subcellular location is the plastid. The protein resides in the chloroplast. Its function is as follows. One of the primary rRNA binding proteins, it binds directly to 16S rRNA where it nucleates assembly of the body of the 30S subunit. In terms of biological role, with S5 and S12 plays an important role in translational accuracy. In Oltmannsiellopsis viridis (Marine flagellate), this protein is Small ribosomal subunit protein uS4c (rps4).